Here is a 231-residue protein sequence, read N- to C-terminus: Ribonuclease 3 (231 aa).

The region spanning 5–134 is the RNase III domain; that stretch reads QKKLKNDYGL…FLGALFIDQG (130 aa). Glu47 serves as a coordination point for Mg(2+). Asp51 is a catalytic residue. Mg(2+) contacts are provided by Asn120 and Glu123. The active site involves Glu123. The DRBM domain occupies 160–229; sequence DYKTELQEVL…AENAIKGQNH (70 aa).

This sequence belongs to the ribonuclease III family. As to quaternary structure, homodimer. Mg(2+) serves as cofactor.

It is found in the cytoplasm. It carries out the reaction Endonucleolytic cleavage to 5'-phosphomonoester.. In terms of biological role, digests double-stranded RNA. Involved in the processing of primary rRNA transcript to yield the immediate precursors to the large and small rRNAs (23S and 16S). Processes some mRNAs, and tRNAs when they are encoded in the rRNA operon. Processes pre-crRNA and tracrRNA of type II CRISPR loci if present in the organism. The chain is Ribonuclease 3 from Lactococcus lactis subsp. cremoris (strain MG1363).